The primary structure comprises 199 residues: Imidazole glycerol phosphate synthase subunit HisH 2 (199 aa).

Residues M1–C199 form the Glutamine amidotransferase type-1 domain. The active-site Nucleophile is the C76. Active-site residues include H177 and E179.

In terms of assembly, heterodimer of HisH and HisF.

It is found in the cytoplasm. It carries out the reaction 5-[(5-phospho-1-deoxy-D-ribulos-1-ylimino)methylamino]-1-(5-phospho-beta-D-ribosyl)imidazole-4-carboxamide + L-glutamine = D-erythro-1-(imidazol-4-yl)glycerol 3-phosphate + 5-amino-1-(5-phospho-beta-D-ribosyl)imidazole-4-carboxamide + L-glutamate + H(+). The enzyme catalyses L-glutamine + H2O = L-glutamate + NH4(+). The protein operates within amino-acid biosynthesis; L-histidine biosynthesis; L-histidine from 5-phospho-alpha-D-ribose 1-diphosphate: step 5/9. Its function is as follows. IGPS catalyzes the conversion of PRFAR and glutamine to IGP, AICAR and glutamate. The HisH subunit provides the glutamine amidotransferase activity that produces the ammonia necessary to HisF for the synthesis of IGP and AICAR. The sequence is that of Imidazole glycerol phosphate synthase subunit HisH 2 from Legionella pneumophila (strain Paris).